A 124-amino-acid polypeptide reads, in one-letter code: Urotensin-2 (124 aa).

The first 20 residues, 1–20, serve as a signal peptide directing secretion; that stretch reads MYKLASCCLLFIGFLNPLLS. The propeptide occupies 21-110; that stretch reads LPLLDSREIS…HLLARIWKPY (90 aa). Cys-118 and Cys-123 are disulfide-bonded.

This sequence belongs to the urotensin-2 family. As to expression, brain specific.

It localises to the secreted. Highly potent vasoconstrictor. In Homo sapiens (Human), this protein is Urotensin-2 (UTS2).